The chain runs to 85 residues: MPNIKSAIKRVKVNEAKTLENTIRKSALKTTIKKCKEAIVTGENTSDAYTAATKALDKAAAKNILHKNTAARKKSRLAKALNAAK.

This sequence belongs to the bacterial ribosomal protein bS20 family.

Its function is as follows. Binds directly to 16S ribosomal RNA. The protein is Small ribosomal subunit protein bS20 of Ruminiclostridium cellulolyticum (strain ATCC 35319 / DSM 5812 / JCM 6584 / H10) (Clostridium cellulolyticum).